A 65-amino-acid polypeptide reads, in one-letter code: UPF0434 protein HS_0657 (65 aa).

Belongs to the UPF0434 family.

This is UPF0434 protein HS_0657 from Histophilus somni (strain 129Pt) (Haemophilus somnus).